We begin with the raw amino-acid sequence, 270 residues long: MEQFYYILKYLILGLFQGLTEPIPISSSGHLVLAQHLLGLKIEGFSFELLVNSASLLAVLLIYRNDLIRLTKNGLSYIFTRAEDAKSDFFFIIYLVIATIPAGVIGVLFKDYIDQYLKGVKMVGISLLITAVGLWIIRNLRGRKNDGDLSMKDAIIVGLAQACALIPGISRSGATIVAAMLLGMKQETALRFSFLLYIPVSLGGLLLSITDIAKDPNLDTLFVPYIVAFIATFIMTYISLKWFMNIMAKGNLKYFSFYCIIVGVLTLIFL.

Transmembrane regions (helical) follow at residues 5 to 25 (YYIL…PIPI), 42 to 62 (IEGF…VLLI), 89 to 109 (FFFI…GVLF), 117 to 137 (LKGV…LWII), 192 to 212 (FSFL…ITDI), 220 to 240 (TLFV…YISL), and 250 to 270 (GNLK…LIFL).

The protein belongs to the UppP family.

It localises to the cell membrane. It catalyses the reaction di-trans,octa-cis-undecaprenyl diphosphate + H2O = di-trans,octa-cis-undecaprenyl phosphate + phosphate + H(+). Functionally, catalyzes the dephosphorylation of undecaprenyl diphosphate (UPP). Confers resistance to bacitracin. The protein is Undecaprenyl-diphosphatase 1 of Bacillus cereus (strain ATCC 10987 / NRS 248).